Consider the following 436-residue polypeptide: UDP-N-acetylmuramate--L-alanine ligase (436 aa).

111-117 lines the ATP pocket; that stretch reads GTHGKTS.

It belongs to the MurCDEF family.

It localises to the cytoplasm. The enzyme catalyses UDP-N-acetyl-alpha-D-muramate + L-alanine + ATP = UDP-N-acetyl-alpha-D-muramoyl-L-alanine + ADP + phosphate + H(+). It participates in cell wall biogenesis; peptidoglycan biosynthesis. Its function is as follows. Cell wall formation. The chain is UDP-N-acetylmuramate--L-alanine ligase from Lactiplantibacillus plantarum (strain ATCC BAA-793 / NCIMB 8826 / WCFS1) (Lactobacillus plantarum).